Here is a 235-residue protein sequence, read N- to C-terminus: Urease accessory protein UreF (235 aa).

The protein belongs to the UreF family. In terms of assembly, ureD, UreF and UreG form a complex that acts as a GTP-hydrolysis-dependent molecular chaperone, activating the urease apoprotein by helping to assemble the nickel containing metallocenter of UreC. The UreE protein probably delivers the nickel.

The protein resides in the cytoplasm. Functionally, required for maturation of urease via the functional incorporation of the urease nickel metallocenter. The protein is Urease accessory protein UreF of Haemophilus influenzae (strain 86-028NP).